The primary structure comprises 189 residues: MTKLLVGLGNPGDKYFETKHNVGFMLIDQLAKKQNVTFTHDKIFQADLASFFLNGEKIYLVKPTTFMNESGKAVHALLTYYGLDIDDLLIIYDDLDMEVGKIRLRAKGSAGGHNGIKSIIQHIGTQVFNRVKIGIGRPKNGMSVVHHVLSKFDRDDYIGILQSIDKVDDSVNYYLQEKKFEKTMQRYNG.

TRNA is bound at residue tyrosine 15. Histidine 20 (proton acceptor) is an active-site residue. The tRNA site is built by phenylalanine 66, asparagine 68, and asparagine 114.

This sequence belongs to the PTH family. In terms of assembly, monomer.

Its subcellular location is the cytoplasm. The enzyme catalyses an N-acyl-L-alpha-aminoacyl-tRNA + H2O = an N-acyl-L-amino acid + a tRNA + H(+). Functionally, hydrolyzes ribosome-free peptidyl-tRNAs (with 1 or more amino acids incorporated), which drop off the ribosome during protein synthesis, or as a result of ribosome stalling. In terms of biological role, catalyzes the release of premature peptidyl moieties from peptidyl-tRNA molecules trapped in stalled 50S ribosomal subunits, and thus maintains levels of free tRNAs and 50S ribosomes. The protein is Peptidyl-tRNA hydrolase of Streptococcus pneumoniae serotype 2 (strain D39 / NCTC 7466).